Here is a 369-residue protein sequence, read N- to C-terminus: 4-hydroxy-3-methylbut-2-en-1-yl diphosphate synthase (flavodoxin) (369 aa).

Residues Cys270, Cys273, Cys305, and Glu312 each contribute to the [4Fe-4S] cluster site.

The protein belongs to the IspG family. The cofactor is [4Fe-4S] cluster.

The catalysed reaction is (2E)-4-hydroxy-3-methylbut-2-enyl diphosphate + oxidized [flavodoxin] + H2O + 2 H(+) = 2-C-methyl-D-erythritol 2,4-cyclic diphosphate + reduced [flavodoxin]. Its pathway is isoprenoid biosynthesis; isopentenyl diphosphate biosynthesis via DXP pathway; isopentenyl diphosphate from 1-deoxy-D-xylulose 5-phosphate: step 5/6. Converts 2C-methyl-D-erythritol 2,4-cyclodiphosphate (ME-2,4cPP) into 1-hydroxy-2-methyl-2-(E)-butenyl 4-diphosphate. This Pseudomonas putida (strain GB-1) protein is 4-hydroxy-3-methylbut-2-en-1-yl diphosphate synthase (flavodoxin).